A 172-amino-acid polypeptide reads, in one-letter code: Translationally-controlled tumor protein homolog (172 aa).

The TCTP domain maps to 1–172 (MIIFKDLLTG…FKHGLDEEKV (172 aa)).

This sequence belongs to the TCTP family. Expressed by the venom gland.

The protein localises to the secreted. In terms of biological role, venom protein that causes edema, enhances vascular permeability and is likely related to the inflammatory activity of the venom. The sequence is that of Translationally-controlled tumor protein homolog from Loxosceles intermedia (Brown spider).